The primary structure comprises 980 residues: MAETSVFSIMMLTVMTAVGRGATDRPGRVSRCGERPSANASVTYNLLSRIVGGTSAVKGESPWMVSLKRDGKHFCGGTIISDKHVLTAAHCVLDKNIEYHVRVSIGDHDFTVYERSEQIFAIKAVFKHPNFNPIRPFNYDLAIVELGESIAFDKDIQPACLPSPDDVFPTGTLCIALGWGRLQENGRLPSSLQQVVLPLIEYRKCLSIMETVDRRLAFETVVCAGFPEGGKDACQGDSGGPFLCQRSQGRWVLVGVTSWGLGCARKWVDNILDPPERRGSPGVFTDIQRLLNWLSANLNQDKPDFPTYEVQCSTNDGIEKGTAGEILLPTDYRKYYSNNEKCIWTIIVPKGKHILLTFNSFNVEWDYSCDLDYLVIYSALGRLIGKFCGDVRPRPLLIADASVTLKFISDFQEYKTGFSLFYQAVEPNTYPDSDCGSVAVIFEEGEIQTMNHPHVYSSHANCQWVVHSPANHIIKITFLVFEVEPSEGCIFDRLVVYHDLQGTMVAGIFCGFSLPDPVLSVSNVMQITFTSDYSVNYLGFQAVISFVLPSSPVKSETQWKGNNQPRKNQDAMQHYEEGCGVSPLPPRFIHHNIIKAEEAMPNSWPWHVSINFGNKHLCNGAILSKTFVVTSANCVADREEFPSVGLIVAGLHDLESSTDAQKRTVEYVIVHPDYNRLSKDYDVALIHVQMPFQYNSHVQPICLPDGHSKLEPSKLCVVSGWDLNVELSTKLQQLEVPVLMDDVCKKYYDGITDRMFCAGVIAEEDNVSCLAQSGAPLVCQSDPGTYVIFGIVSWGVGCNEPPKAGVYSSVPLFIPWIMETILSVAGIANTDTEPHHPLIPPDKLSQEKALLPDSPPSNDSSSSQDIYVTCKDVMSLQSPGEIKLVASAQDGPEGGRCQLIFQAPEDHFILLHFKQLSHEHYSLIIYEGASSNKTFKAQLTEEKIPTIMKSVGPVITIEASSTAQDSALHLWLSYSFHNQN.

A signal peptide spans 1–21 (MAETSVFSIMMLTVMTAVGRG). Residues 22–49 (ATDRPGRVSRCGERPSANASVTYNLLSR) constitute a propeptide, activation peptide. A glycan (N-linked (GlcNAc...) asparagine) is linked at Asn39. The Peptidase S1 1 domain maps to 50–299 (IVGGTSAVKG…LLNWLSANLN (250 aa)). Cysteines 75 and 91 form a disulfide. His90 (charge relay system) is an active-site residue. Ca(2+) is bound by residues Val112 and Glu117. Asp140 (charge relay system) is an active-site residue. 11 cysteine pairs are disulfide-bonded: Cys174/Cys244, Cys205/Cys223, Cys234/Cys263, Cys312/Cys342, Cys369/Cys388, Cys435/Cys462, Cys489/Cys510, Cys618/Cys634, Cys716/Cys779, Cys744/Cys757, and Cys769/Cys798. Ser238 acts as the Charge relay system in catalysis. 2 consecutive CUB domains span residues 312 to 425 (CSTN…YQAV) and 435 to 547 (CGSV…ISFV). The 230-residue stretch at 593–822 (IIKAEEAMPN…FIPWIMETIL (230 aa)) folds into the Peptidase S1 2 domain. Positions 593–980 (IIKAEEAMPN…WLSYSFHNQN (388 aa)) are cleaved as a propeptide — activation peptide. An N-linked (GlcNAc...) asparagine glycan is attached at Asn766. Residues 835–863 (HHPLIPPDKLSQEKALLPDSPPSNDSSSS) are disordered. Residues Asn858 and Asn932 are each glycosylated (N-linked (GlcNAc...) asparagine).

This sequence belongs to the peptidase S1 family. Post-translationally, the catalytically inactive 108 kDa form is processed both N- and C-terminally to give rise to catalytically active and inactive forms. In terms of tissue distribution, differentially expressed in the oviductal pars recta (PR) region.

The protein localises to the secreted. It catalyses the reaction Preferential cleavage at 371-Gly-Ser-Arg-|-Trp-374 of glycoprotein gp43 in Xenopus laevis coelemic egg envelope to yield gp41.. Functionally, mediates gamete interaction by affecting the vitelline coat. The sequence is that of Ovochymase-2 (OVCH2) from Rhinella arenarum (Argentine common toad).